The following is a 500-amino-acid chain: NAD(P)H-quinone oxidoreductase chain 4, chloroplastic (500 aa).

The next 14 membrane-spanning stretches (helical) occupy residues 4–24 (FPWL…IFFL), 37–57 (ISIC…HFQL), 87–107 (LGSI…AWPI), 113–130 (LFYF…GLFS), 134–154 (LLLF…LLSM), 167–187 (FILY…GMGL), 211–231 (ILLY…IPLH), 242–262 (HYST…YGLI), 272–292 (AHYL…IYAA), 313–333 (MGFI…GAIL), 334–354 (QILS…TASD), 386–406 (LALP…GLIT), 417–437 (LITF…LSML), and 462–482 (LFIL…PDFV).

This sequence belongs to the complex I subunit 4 family.

Its subcellular location is the plastid. The protein resides in the chloroplast thylakoid membrane. The enzyme catalyses a plastoquinone + NADH + (n+1) H(+)(in) = a plastoquinol + NAD(+) + n H(+)(out). The catalysed reaction is a plastoquinone + NADPH + (n+1) H(+)(in) = a plastoquinol + NADP(+) + n H(+)(out). The polypeptide is NAD(P)H-quinone oxidoreductase chain 4, chloroplastic (ndhD) (Triticum aestivum (Wheat)).